The primary structure comprises 339 residues: Phosphate acyltransferase (339 aa).

Belongs to the PlsX family. As to quaternary structure, homodimer. Probably interacts with PlsY.

It localises to the cytoplasm. The enzyme catalyses a fatty acyl-[ACP] + phosphate = an acyl phosphate + holo-[ACP]. Its pathway is lipid metabolism; phospholipid metabolism. Its function is as follows. Catalyzes the reversible formation of acyl-phosphate (acyl-PO(4)) from acyl-[acyl-carrier-protein] (acyl-ACP). This enzyme utilizes acyl-ACP as fatty acyl donor, but not acyl-CoA. This chain is Phosphate acyltransferase, found in Acetivibrio thermocellus (strain ATCC 27405 / DSM 1237 / JCM 9322 / NBRC 103400 / NCIMB 10682 / NRRL B-4536 / VPI 7372) (Clostridium thermocellum).